A 985-amino-acid polypeptide reads, in one-letter code: Guanine nucleotide exchange protein smcr8b (985 aa).

The uDENN FLCN/SMCR8-type domain occupies 47-225 (ISSAKLKKDF…VKCSSEREPI (179 aa)). A compositionally biased stretch (basic and acidic residues) spans 242–292 (NEKSSHTDEISPQEKDGCGNSRKVEVKLENENRSHFEHEQYGKQRKDKPDK). Disordered regions lie at residues 242–301 (NEKS…PLAN), 502–528 (QSQV…SPAE), and 639–659 (EESP…EDNN). Residues 390 to 895 (RLKTLEELCD…LINLLVEPKS (506 aa)) form the cDENN FLCN/SMCR8-type domain. Positions 502 to 514 (QSQVQHSTLNTPS) are enriched in polar residues. Residues 904 to 962 (FTFAQSVQSKLVTKAFLLTFSHGHPSPSRPQGSSGTECFLSELHTDDKKILRYLSELIK) form the dDENN FLCN/SMCR8-type domain.

It belongs to the SMCR8 family. As to quaternary structure, component of the C9orf72-SMCR8 complex. The C9orf72-SMCR8 complex associates with the ATG1/ULK1 kinase complex.

The protein resides in the cytoplasm. It localises to the nucleus. In terms of biological role, component of the C9orf72-SMCR8 complex, a complex that has guanine nucleotide exchange factor (GEF) activity and regulates autophagy. In the complex, C9orf72 and SMCR8 probably constitute the catalytic subunits that promote the exchange of GDP to GTP, converting inactive GDP-bound RAB8A and RAB39B into their active GTP-bound form, thereby promoting autophagosome maturation. The C9orf72-SMCR8 complex also acts as a negative regulator of autophagy initiation by interacting with the ATG1/ULK1 kinase complex and inhibiting its protein kinase activity. The chain is Guanine nucleotide exchange protein smcr8b (smcr8b) from Danio rerio (Zebrafish).